Here is a 255-residue protein sequence, read N- to C-terminus: uncharacterized protein (255 aa).

The protein belongs to the IIV-6 155L family.

This is an uncharacterized protein from Acheta domesticus (House cricket).